The primary structure comprises 621 residues: Protein CASP (621 aa).

Residues 1–574 (MEIVSRAWES…ILATPKSRTV (574 aa)) are Cytoplasmic-facing. Coiled coils occupy residues 101–445 (LLKG…VQDI) and 473–525 (ILTS…FLQS). Residues 575–595 (FFSYLLILHALIMLVLYKFAF) form a helical; Anchor for type IV membrane protein membrane-spanning segment. Residues 596 to 621 (DQSVVRDAETECEYKFHQHMLDNHKQ) lie on the Lumenal side of the membrane.

This sequence belongs to the CASP family.

It localises to the golgi apparatus membrane. Its function is as follows. May be involved in intra-Golgi retrograde transport. This Caenorhabditis elegans protein is Protein CASP (ceh-44).